The sequence spans 257 residues: Phosphonates import ATP-binding protein PhnC (257 aa).

Residues 4–248 (IEFKNVSKVY…IFSEIYGRTI (245 aa)) form the ABC transporter domain. Residue 37–44 (GLSGAGKS) coordinates ATP.

Belongs to the ABC transporter superfamily. Phosphonates importer (TC 3.A.1.9.1) family. In terms of assembly, the complex is composed of two ATP-binding proteins (PhnC), two transmembrane proteins (PhnE) and a solute-binding protein (PhnD).

It localises to the cell membrane. The catalysed reaction is phosphonate(out) + ATP + H2O = phosphonate(in) + ADP + phosphate + H(+). Part of the ABC transporter complex PhnCDE involved in phosphonates import. Responsible for energy coupling to the transport system. The protein is Phosphonates import ATP-binding protein PhnC of Staphylococcus aureus (strain bovine RF122 / ET3-1).